Consider the following 206-residue polypeptide: Large ribosomal subunit protein uL3 (206 aa).

The tract at residues Gly116–Pro149 is disordered.

The protein belongs to the universal ribosomal protein uL3 family. Part of the 50S ribosomal subunit. Forms a cluster with proteins L14 and L19.

Its function is as follows. One of the primary rRNA binding proteins, it binds directly near the 3'-end of the 23S rRNA, where it nucleates assembly of the 50S subunit. The sequence is that of Large ribosomal subunit protein uL3 from Shouchella clausii (strain KSM-K16) (Alkalihalobacillus clausii).